Reading from the N-terminus, the 490-residue chain is Cytochrome P450 2C19 (490 aa).

Cys435 is a heme binding site.

This sequence belongs to the cytochrome P450 family. The cofactor is heme.

It localises to the endoplasmic reticulum membrane. It is found in the microsome membrane. The enzyme catalyses an organic molecule + reduced [NADPH--hemoprotein reductase] + O2 = an alcohol + oxidized [NADPH--hemoprotein reductase] + H2O + H(+). The catalysed reaction is (5Z,8Z,11Z)-eicosatrienoate + reduced [NADPH--hemoprotein reductase] + O2 = 19-hydroxy-(5Z,8Z,11Z)-eicosatrienoate + oxidized [NADPH--hemoprotein reductase] + H2O + H(+). It carries out the reaction (5Z,8Z,11Z,14Z)-eicosatetraenoate + reduced [NADPH--hemoprotein reductase] + O2 = 19-hydroxy-(5Z,8Z,11Z,14Z)-eicosatetraenoate + oxidized [NADPH--hemoprotein reductase] + H2O + H(+). It catalyses the reaction (5Z,8Z,11Z,14Z,17Z)-eicosapentaenoate + reduced [NADPH--hemoprotein reductase] + O2 = 19-hydroxy-(5Z,8Z,11Z,14Z,17Z)-eicosapentaenoate + oxidized [NADPH--hemoprotein reductase] + H2O + H(+). The enzyme catalyses (4Z,7Z,10Z,13Z,16Z,19Z)-docosahexaenoate + reduced [NADPH--hemoprotein reductase] + O2 = 21-hydroxy-(4Z,7Z,10Z,13Z,16Z,19Z)-docosahexaenoate + oxidized [NADPH--hemoprotein reductase] + H2O + H(+). The catalysed reaction is (5Z,8Z,11Z,14Z)-eicosatetraenoate + reduced [NADPH--hemoprotein reductase] + O2 = (8R,9S)-epoxy-(5Z,11Z,14Z)-eicosatrienoate + oxidized [NADPH--hemoprotein reductase] + H2O + H(+). It carries out the reaction (5Z,8Z,11Z,14Z)-eicosatetraenoate + reduced [NADPH--hemoprotein reductase] + O2 = (11R,12S)-epoxy-(5Z,8Z,14Z)-eicosatrienoate + oxidized [NADPH--hemoprotein reductase] + H2O + H(+). It catalyses the reaction (5Z,8Z,11Z,14Z)-eicosatetraenoate + reduced [NADPH--hemoprotein reductase] + O2 = (11S,12R)-epoxy-(5Z,8Z,14Z)-eicosatrienoate + oxidized [NADPH--hemoprotein reductase] + H2O + H(+). The enzyme catalyses (5Z,8Z,11Z,14Z)-eicosatetraenoate + reduced [NADPH--hemoprotein reductase] + O2 = (14R,15S)-epoxy-(5Z,8Z,11Z)-eicosatrienoate + oxidized [NADPH--hemoprotein reductase] + H2O + H(+). The catalysed reaction is (5Z,8Z,11Z,14Z,17Z)-eicosapentaenoate + reduced [NADPH--hemoprotein reductase] + O2 = (17R,18S)-epoxy-(5Z,8Z,11Z,14Z)-eicosatetraenoate + oxidized [NADPH--hemoprotein reductase] + H2O + H(+). It carries out the reaction (4Z,7Z,10Z,13Z,16Z,19Z)-docosahexaenoate + reduced [NADPH--hemoprotein reductase] + O2 = (19R,20S)-epoxy-(4Z,7Z,10Z,13Z,16Z)-docosapentaenoate + oxidized [NADPH--hemoprotein reductase] + H2O + H(+). It catalyses the reaction (4Z,7Z,10Z,13Z,16Z,19Z)-docosahexaenoate + reduced [NADPH--hemoprotein reductase] + O2 = (19S,20R)-epoxy-(4Z,7Z,10Z,13Z,16Z)-docosapentaenoate + oxidized [NADPH--hemoprotein reductase] + H2O + H(+). The enzyme catalyses (4R)-limonene + reduced [NADPH--hemoprotein reductase] + O2 = (1R,5S)-carveol + oxidized [NADPH--hemoprotein reductase] + H2O + H(+). The catalysed reaction is (4S)-limonene + reduced [NADPH--hemoprotein reductase] + O2 = (1S,5R)-carveol + oxidized [NADPH--hemoprotein reductase] + H2O + H(+). It carries out the reaction (4S)-limonene + reduced [NADPH--hemoprotein reductase] + O2 = (4S)-perillyl alcohol + oxidized [NADPH--hemoprotein reductase] + H2O + H(+). It catalyses the reaction fenbendazole + reduced [NADPH--hemoprotein reductase] + O2 = 4'-hydroxyfenbendazole + oxidized [NADPH--hemoprotein reductase] + H2O + H(+). It participates in lipid metabolism; fatty acid metabolism. Its pathway is terpene metabolism; (4R)-limonene degradation. Its function is as follows. A cytochrome P450 monooxygenase involved in the metabolism of polyunsaturated fatty acids (PUFA). Mechanistically, uses molecular oxygen inserting one oxygen atom into a substrate, and reducing the second into a water molecule, with two electrons provided by NADPH via cytochrome P450 reductase (NADPH--hemoprotein reductase). Catalyzes the hydroxylation of carbon-hydrogen bonds. Hydroxylates PUFA specifically at the omega-1 position. Catalyzes the epoxidation of double bonds of PUFA. Also metabolizes plant monoterpenes such as limonene. Oxygenates (R)- and (S)-limonene to produce carveol and perillyl alcohol. Responsible for the metabolism of a number of therapeutic agents such as the anticonvulsant drug S-mephenytoin, omeprazole, proguanil, certain barbiturates, diazepam, propranolol, citalopram and imipramine. Hydroxylates fenbendazole at the 4' position. In Homo sapiens (Human), this protein is Cytochrome P450 2C19 (CYP2C19).